A 563-amino-acid chain; its full sequence is DNA mismatch repair protein MutL (563 aa).

It belongs to the DNA mismatch repair MutL/HexB family.

In terms of biological role, this protein is involved in the repair of mismatches in DNA. It is required for dam-dependent methyl-directed DNA mismatch repair. May act as a 'molecular matchmaker', a protein that promotes the formation of a stable complex between two or more DNA-binding proteins in an ATP-dependent manner without itself being part of a final effector complex. This Trichormus variabilis (strain ATCC 29413 / PCC 7937) (Anabaena variabilis) protein is DNA mismatch repair protein MutL.